The primary structure comprises 436 residues: Carboxypeptidase A5 (436 aa).

Positions 1–33 (MQGTPAGGTSPGPSPMDRQTLLVFSLILAAALG) are cleaved as a signal peptide. Residues 34 to 126 (QMNFTGDQVL…EREAMAKSRR (93 aa)) constitute a propeptide, activation peptide. One can recognise a Peptidase M14 domain in the interval 138-431 (SYHTLEEISS…MALRTIMEHT (294 aa)). Zn(2+) is bound by residues His196 and Glu199. Residues 196–199 (HSRE), Arg254, and 271–272 (NR) each bind substrate. The cysteines at positions 265 and 288 are disulfide-linked. His323 contributes to the Zn(2+) binding site. Substrate contacts are provided by residues 324-325 (SY) and Tyr375. Glu397 (proton donor/acceptor) is an active-site residue.

This sequence belongs to the peptidase M14 family. Zn(2+) is required as a cofactor.

Its subcellular location is the secreted. The protein is Carboxypeptidase A5 (CPA5) of Macaca fascicularis (Crab-eating macaque).